The sequence spans 122 residues: Glucagon-2 (122 aa).

Residues 1–21 (MTSLHSLAGLLLLMIIQSSWQ) form the signal peptide. Propeptides lie at residues 83-86 (NGLF) and glutamate 122.

It belongs to the glucagon family.

The protein resides in the secreted. Functionally, promotes hydrolysis of glycogen and lipids, and raises the blood sugar level. This chain is Glucagon-2 (gcg2), found in Lophius americanus (American angler).